Reading from the N-terminus, the 433-residue chain is Homoserine dehydrogenase (433 aa).

3 residues coordinate NADPH: threonine 12, valine 13, and lysine 102. Residue valine 13 participates in NAD(+) binding. The NADP(+) site is built by valine 13 and lysine 102. Residues glutamate 126, valine 129, glycine 131, and isoleucine 133 each coordinate Na(+). Positions 184 and 187 each coordinate NADP(+). L-homoserine is bound by residues glutamate 187 and aspartate 198. Lysine 202 (proton donor) is an active-site residue. Glycine 303 is a binding site for NADPH. Glycine 303 lines the NAD(+) pocket. Residue glycine 303 participates in NADP(+) binding. Positions 356–433 (YCRFLCADVP…EIPSVIRVLS (78 aa)) constitute an ACT domain.

Belongs to the homoserine dehydrogenase family. A metal cation is required as a cofactor.

The enzyme catalyses L-homoserine + NADP(+) = L-aspartate 4-semialdehyde + NADPH + H(+). It carries out the reaction L-homoserine + NAD(+) = L-aspartate 4-semialdehyde + NADH + H(+). The protein operates within amino-acid biosynthesis; L-methionine biosynthesis via de novo pathway; L-homoserine from L-aspartate: step 3/3. Its pathway is amino-acid biosynthesis; L-threonine biosynthesis; L-threonine from L-aspartate: step 3/5. Functionally, catalyzes the conversion of L-aspartate-beta-semialdehyde (L-Asa) to L-homoserine (L-Hse), the third step in the biosynthesis of threonine and methionine from aspartate. The chain is Homoserine dehydrogenase (hom) from Synechocystis sp. (strain ATCC 27184 / PCC 6803 / Kazusa).